Reading from the N-terminus, the 263-residue chain is Ribosomal RNA large subunit methyltransferase E (263 aa).

S-adenosyl-L-methionine is bound by residues Gly48, Trp50, Asp68, Asp88, and Asp118. Lys158 (proton acceptor) is an active-site residue. The 59-residue stretch at 205 to 263 (PVREGDIVEATIEDIGEEGDGIAKVENFTVFVSGVEDGETVEVRIDDVKPRYAFAEPVE) folds into the TRAM domain.

Belongs to the class I-like SAM-binding methyltransferase superfamily. RNA methyltransferase RlmE family.

Its subcellular location is the cytoplasm. It catalyses the reaction uridine(2552) in 23S rRNA + S-adenosyl-L-methionine = 2'-O-methyluridine(2552) in 23S rRNA + S-adenosyl-L-homocysteine + H(+). In terms of biological role, specifically methylates the uridine in position 2552 of 23S rRNA at the 2'-O position of the ribose in the fully assembled 50S ribosomal subunit. The chain is Ribosomal RNA large subunit methyltransferase E from Haloarcula marismortui (strain ATCC 43049 / DSM 3752 / JCM 8966 / VKM B-1809) (Halobacterium marismortui).